Reading from the N-terminus, the 244-residue chain is 5-oxoprolinase subunit A (244 aa).

It belongs to the LamB/PxpA family. Forms a complex composed of PxpA, PxpB and PxpC.

It carries out the reaction 5-oxo-L-proline + ATP + 2 H2O = L-glutamate + ADP + phosphate + H(+). Functionally, catalyzes the cleavage of 5-oxoproline to form L-glutamate coupled to the hydrolysis of ATP to ADP and inorganic phosphate. The chain is 5-oxoprolinase subunit A from Shigella sonnei (strain Ss046).